Consider the following 101-residue polypeptide: Small ribosomal subunit protein uS14A (101 aa).

Composition is skewed to basic and acidic residues over residues 28–44 (KETI…RAEA) and 61–70 (RNRDAADGRP). Residues 28-74 (KETIRRPSSSEDERAEARAALQRLPRDASPVRLRNRDAADGRPRGHL) are disordered.

It belongs to the universal ribosomal protein uS14 family. As to quaternary structure, part of the 30S ribosomal subunit. Contacts proteins S3 and S10.

Its function is as follows. Binds 16S rRNA, required for the assembly of 30S particles and may also be responsible for determining the conformation of the 16S rRNA at the A site. The sequence is that of Small ribosomal subunit protein uS14A from Rhodococcus jostii (strain RHA1).